We begin with the raw amino-acid sequence, 199 residues long: ATP-dependent Clp protease proteolytic subunit 2 (199 aa).

Catalysis depends on S98, which acts as the Nucleophile. H123 is an active-site residue.

It belongs to the peptidase S14 family. Fourteen ClpP subunits assemble into 2 heptameric rings which stack back to back to give a disk-like structure with a central cavity, resembling the structure of eukaryotic proteasomes.

The protein resides in the cytoplasm. It carries out the reaction Hydrolysis of proteins to small peptides in the presence of ATP and magnesium. alpha-casein is the usual test substrate. In the absence of ATP, only oligopeptides shorter than five residues are hydrolyzed (such as succinyl-Leu-Tyr-|-NHMec, and Leu-Tyr-Leu-|-Tyr-Trp, in which cleavage of the -Tyr-|-Leu- and -Tyr-|-Trp bonds also occurs).. Cleaves peptides in various proteins in a process that requires ATP hydrolysis. Has a chymotrypsin-like activity. Plays a major role in the degradation of misfolded proteins. This Treponema pallidum (strain Nichols) protein is ATP-dependent Clp protease proteolytic subunit 2.